The primary structure comprises 346 residues: T-box protein 12 (346 aa).

Acidic residues predominate over residues aspartate 33–aspartate 48. Residues aspartate 33–isoleucine 66 are disordered. The T-box DNA-binding region spans leucine 86–aspartate 268.

The protein localises to the nucleus. Transcription factor. Involved in cell fate determination; required to pattern the posterior hindgut. Involved in motor neuron fate determination and maintenance, acting as a transcriptional repressor to counteract gene activation by transcription factor unc-3 in a subset of motor neurons. Required throughout development to repress transcription by unc-3, probably acting by binding to specific promoter elements. Represses expression of VA and VB motor neuron-specific effector genes, such as DEG/ENaC channel del-1 and the innexin inx-12, in DA and DB motor neurons. Represses expression of transcription factor bnc-1, perhaps acting directly, in DA and DB motor neurons. The chain is T-box protein 12 (mab-9) from Caenorhabditis elegans.